Reading from the N-terminus, the 315-residue chain is N-acetyl-gamma-glutamyl-phosphate reductase (315 aa).

Cysteine 117 is a catalytic residue.

This sequence belongs to the NAGSA dehydrogenase family. Type 2 subfamily.

It is found in the cytoplasm. It carries out the reaction N-acetyl-L-glutamate 5-semialdehyde + phosphate + NADP(+) = N-acetyl-L-glutamyl 5-phosphate + NADPH + H(+). Its pathway is amino-acid biosynthesis; L-arginine biosynthesis; N(2)-acetyl-L-ornithine from L-glutamate: step 3/4. Functionally, catalyzes the NADPH-dependent reduction of N-acetyl-5-glutamyl phosphate to yield N-acetyl-L-glutamate 5-semialdehyde. This chain is N-acetyl-gamma-glutamyl-phosphate reductase, found in Burkholderia ambifaria (strain ATCC BAA-244 / DSM 16087 / CCUG 44356 / LMG 19182 / AMMD) (Burkholderia cepacia (strain AMMD)).